A 785-amino-acid chain; its full sequence is Mitochondrial intermediate peptidase (785 aa).

The N-terminal 43 residues, 1–43 (MLTRPAQNALLKSMQPLFRFRGCLLAKSTSTPRRDISTSSRKL), are a transit peptide targeting the mitochondrion. Histidine 567 is a Zn(2+) binding site. The active site involves glutamate 568. Zn(2+) is bound by residues histidine 571 and histidine 574.

It belongs to the peptidase M3 family. The cofactor is Zn(2+).

Its subcellular location is the mitochondrion matrix. The enzyme catalyses Release of an N-terminal octapeptide as second stage of processing of some proteins imported into the mitochondrion.. Its function is as follows. Cleaves proteins, imported into the mitochondrion, to their mature size. While most mitochondrial precursor proteins are processed to the mature form in one step by mitochondrial processing peptidase (MPP), the sequential cleavage by MIP of an octapeptide after initial processing by MPP is a required step for a subgroup of nuclear-encoded precursor proteins destined for the matrix or the inner membrane. The protein is Mitochondrial intermediate peptidase (OCT1) of Pleurotus djamor (Pink oyster mushroom).